The primary structure comprises 199 residues: MFKNTFQSGFLSILYSIGSKPLQLWDKKVRNGHIKRITDNDIQSLVLEIVGTNVSTTFITCPADPKKTLGIKLPFLVMIIKNMKKYFTFEVQVLDDKNVRRRFRASNYQSTTRVKPFICTMPMRLDEGWNQIQFNLSDFTRRAYGTNYVETLRVQIHANCRIRRVYFSDRLYSEDELPPEFKLFLPIQKPVQKSNAICS.

This sequence belongs to the CFAP20 family. As to expression, expressed in spermatocytes and chordotonal organs in sensory neurons of the antenna.

It is found in the nucleus. The protein localises to the nucleolus. It localises to the cell projection. The protein resides in the cilium. Its subcellular location is the cytoplasm. It is found in the cytoskeleton. The protein localises to the microtubule organizing center. It localises to the centrosome. The protein resides in the centriole. Its subcellular location is the flagellum. It is found in the cilium axoneme. Its function is as follows. Cilium- and flagellum-specific protein that plays a role in axonemal structure organization and motility. Microtubule inner protein (MIP) part of the dynein-decorated doublet microtubules (DMTs) in cilia axoneme, which is required for motile cilia beating. Involved in the regulation of the size and morphology of cilia. Required for sperm individualization, differentiation of the sperm flagellum and tubulin polyglycylation of axonemal microtubules. The protein is Cilia- and flagella-associated protein 20 of Drosophila melanogaster (Fruit fly).